Reading from the N-terminus, the 304-residue chain is N-acetylglucosaminyl-phosphatidylinositol de-N-acetylase (304 aa).

The Lumenal segment spans residues 1 to 20 (MKMLRRTKVNFSKLLYKITK). The helical transmembrane segment at 21 to 38 (LAIVLTILYIYFTPKIVS) threads the bilayer. At 39-304 (RNNASLQHIF…FVNEFDVYTY (266 aa)) the chain is on the cytoplasmic side.

This sequence belongs to the PIGL family.

It localises to the endoplasmic reticulum membrane. The enzyme catalyses a 6-(N-acetyl-alpha-D-glucosaminyl)-1-(1,2-diacyl-sn-glycero-3-phospho)-1D-myo-inositol + H2O = a 6-(alpha-D-glucosaminyl)-1-(1,2-diacyl-sn-glycero-3-phospho)-1D-myo-inositol + acetate. Its pathway is glycolipid biosynthesis; glycosylphosphatidylinositol-anchor biosynthesis. Functionally, involved in the second step of GPI biosynthesis. De-N-acetylation of N-acetylglucosaminyl-phosphatidylinositol. The protein is N-acetylglucosaminyl-phosphatidylinositol de-N-acetylase (GPI12) of Saccharomyces cerevisiae (strain ATCC 204508 / S288c) (Baker's yeast).